Here is a 697-residue protein sequence, read N- to C-terminus: Elongation factor G (697 aa).

The 283-residue stretch at 8 to 290 folds into the tr-type G domain; the sequence is ERYRNIGISA…AVLDFLPSPV (283 aa). Residues 17–24, 88–92, and 142–145 each bind GTP; these read AHIDAGKT, DTPGH, and NKMD.

It belongs to the TRAFAC class translation factor GTPase superfamily. Classic translation factor GTPase family. EF-G/EF-2 subfamily.

It is found in the cytoplasm. Catalyzes the GTP-dependent ribosomal translocation step during translation elongation. During this step, the ribosome changes from the pre-translocational (PRE) to the post-translocational (POST) state as the newly formed A-site-bound peptidyl-tRNA and P-site-bound deacylated tRNA move to the P and E sites, respectively. Catalyzes the coordinated movement of the two tRNA molecules, the mRNA and conformational changes in the ribosome. The protein is Elongation factor G of Methylobacillus flagellatus (strain ATCC 51484 / DSM 6875 / VKM B-1610 / KT).